Reading from the N-terminus, the 178-residue chain is Peptidyl-prolyl cis-trans isomerase H (178 aa).

In terms of domain architecture, PPIase cyclophilin-type spans 14–177; it reads FFDISIGDVP…LPVKITECGQ (164 aa).

Belongs to the cyclophilin-type PPIase family. PPIase H subfamily.

The protein resides in the nucleus. The enzyme catalyses [protein]-peptidylproline (omega=180) = [protein]-peptidylproline (omega=0). PPIases accelerate the folding of proteins. It catalyzes the cis-trans isomerization of proline imidic peptide bonds in oligopeptides. In Rhizopus delemar (strain RA 99-880 / ATCC MYA-4621 / FGSC 9543 / NRRL 43880) (Mucormycosis agent), this protein is Peptidyl-prolyl cis-trans isomerase H (cyp7).